The chain runs to 242 residues: Probable transcriptional regulatory protein MHP7448_0474 (242 aa).

The protein belongs to the TACO1 family.

The protein localises to the cytoplasm. The protein is Probable transcriptional regulatory protein MHP7448_0474 of Mesomycoplasma hyopneumoniae (strain 7448) (Mycoplasma hyopneumoniae).